The chain runs to 743 residues: Capsid protein (743 aa).

The segment at Y665 to E706 is disordered.

The protein belongs to the anelloviridae capsid protein family.

Its subcellular location is the virion. Self assemble to form an icosahedral capsid. The polypeptide is Capsid protein (Torque teno virus (isolate Human/China/CT39F/2001) (TTV)).